A 335-amino-acid chain; its full sequence is tRNA N6-adenosine threonylcarbamoyltransferase (335 aa).

A divalent metal cation is bound by residues H109, H113, and Y130. Residues 130-134 (YVSGG), D162, G177, E181, and N266 contribute to the substrate site. D294 is an a divalent metal cation binding site.

Belongs to the KAE1 / TsaD family. As to quaternary structure, component of the EKC/KEOPS complex composed of at least GON7, TP53RK, TPRKB, OSGEP and LAGE3; the whole complex dimerizes. Interacts with PRAME. Requires a divalent metal cation as cofactor. In terms of tissue distribution, widely expressed at low level. Expressed in heart, placenta, liver, kidney, lung, brain, skeletal muscle and pancreas.

Its subcellular location is the cytoplasm. The protein localises to the nucleus. It catalyses the reaction L-threonylcarbamoyladenylate + adenosine(37) in tRNA = N(6)-L-threonylcarbamoyladenosine(37) in tRNA + AMP + H(+). Functionally, component of the EKC/KEOPS complex that is required for the formation of a threonylcarbamoyl group on adenosine at position 37 (t(6)A37) in tRNAs that read codons beginning with adenine. The complex is probably involved in the transfer of the threonylcarbamoyl moiety of threonylcarbamoyl-AMP (TC-AMP) to the N6 group of A37. OSGEP likely plays a direct catalytic role in this reaction, but requires other protein(s) of the complex to fulfill this activity. The protein is tRNA N6-adenosine threonylcarbamoyltransferase of Homo sapiens (Human).